A 396-amino-acid chain; its full sequence is Acyl-[acyl-carrier-protein] desaturase, chloroplastic (396 aa).

A chloroplast-targeting transit peptide spans 1–33 (MALKFHPLTSQSPKLPSFRMPQLASLRSPKFVM). Residues glutamate 138, glutamate 176, histidine 179, glutamate 229, glutamate 262, and histidine 265 each contribute to the Fe cation site.

It belongs to the fatty acid desaturase type 2 family. As to quaternary structure, homodimer. It depends on Fe(2+) as a cofactor.

It is found in the plastid. Its subcellular location is the chloroplast. It participates in lipid metabolism; fatty acid metabolism. Its function is as follows. Introduces a cis double bond in the acyl chain of an acyl-[acyl-carrier protein]. This Cucumis sativus (Cucumber) protein is Acyl-[acyl-carrier-protein] desaturase, chloroplastic.